The following is a 251-amino-acid chain: Small ribosomal subunit protein uS2 (251 aa).

The protein belongs to the universal ribosomal protein uS2 family.

In Nitrosomonas europaea (strain ATCC 19718 / CIP 103999 / KCTC 2705 / NBRC 14298), this protein is Small ribosomal subunit protein uS2.